We begin with the raw amino-acid sequence, 200 residues long: Dephospho-CoA kinase (200 aa).

One can recognise a DPCK domain in the interval 3–200; it reads VIGLTGGIGS…KKYMTLAQGS (198 aa). 11-16 provides a ligand contact to ATP; that stretch reads GSGKTS.

The protein belongs to the CoaE family.

The protein localises to the cytoplasm. The catalysed reaction is 3'-dephospho-CoA + ATP = ADP + CoA + H(+). Its pathway is cofactor biosynthesis; coenzyme A biosynthesis; CoA from (R)-pantothenate: step 5/5. Functionally, catalyzes the phosphorylation of the 3'-hydroxyl group of dephosphocoenzyme A to form coenzyme A. In Nitrosospira multiformis (strain ATCC 25196 / NCIMB 11849 / C 71), this protein is Dephospho-CoA kinase.